The sequence spans 264 residues: Thiazole synthase (264 aa).

The active-site Schiff-base intermediate with DXP is Lys106. 1-deoxy-D-xylulose 5-phosphate is bound by residues Gly167, 193–194 (AG), and 215–216 (NT).

The protein belongs to the ThiG family. As to quaternary structure, homotetramer. Forms heterodimers with either ThiH or ThiS.

It is found in the cytoplasm. It carries out the reaction [ThiS sulfur-carrier protein]-C-terminal-Gly-aminoethanethioate + 2-iminoacetate + 1-deoxy-D-xylulose 5-phosphate = [ThiS sulfur-carrier protein]-C-terminal Gly-Gly + 2-[(2R,5Z)-2-carboxy-4-methylthiazol-5(2H)-ylidene]ethyl phosphate + 2 H2O + H(+). It participates in cofactor biosynthesis; thiamine diphosphate biosynthesis. Catalyzes the rearrangement of 1-deoxy-D-xylulose 5-phosphate (DXP) to produce the thiazole phosphate moiety of thiamine. Sulfur is provided by the thiocarboxylate moiety of the carrier protein ThiS. In vitro, sulfur can be provided by H(2)S. This is Thiazole synthase from Xylella fastidiosa (strain 9a5c).